The sequence spans 873 residues: Tyrosine-protein kinase transforming protein Fps (873 aa).

The interval 1-46 (ASGQLHRPQPQEHTSTSAAAGTWRLTQASESRHRLPHCSAAPSHQD) is disordered. Residues 11–29 (QEHTSTSAAAGTWRLTQAS) show a composition bias toward polar residues. An F-BAR domain is found at 50–313 (MGFGPELWCP…AVEMIDPATE (264 aa)). A disordered region spans residues 445–471 (GSEEPPPALPLQEDRQSARSTDQERSG). Basic and acidic residues predominate over residues 456–469 (QEDRQSARSTDQER). One can recognise an SH2 domain in the interval 511–600 (WYHGAIPRSE…KSGIVLTRAV (90 aa)). The Protein kinase domain maps to 612–865 (VLLGERIGRG…PSFGAVHQDL (254 aa)). Residues 618-626 (IGRGNFGEV) and K641 each bind ATP. D734 (proton acceptor) is an active-site residue. Y764 carries the phosphotyrosine; by autocatalysis modification.

Belongs to the protein kinase superfamily. Tyr protein kinase family. Fes/fps subfamily.

The enzyme catalyses L-tyrosyl-[protein] + ATP = O-phospho-L-tyrosyl-[protein] + ADP + H(+). In Gallus gallus (Chicken), this protein is Tyrosine-protein kinase transforming protein Fps (V-FPS).